Consider the following 66-residue polypeptide: Large ribosomal subunit protein uL29 (66 aa).

This sequence belongs to the universal ribosomal protein uL29 family.

This Roseiflexus castenholzii (strain DSM 13941 / HLO8) protein is Large ribosomal subunit protein uL29.